A 365-amino-acid polypeptide reads, in one-letter code: Chorismate synthase (365 aa).

Position 46 (Arg46) interacts with NADP(+). FMN is bound by residues 123–125 (RSS), 241–242 (NG), Gly281, 296–300 (KPTPS), and Arg322.

This sequence belongs to the chorismate synthase family. As to quaternary structure, homotetramer. FMNH2 is required as a cofactor.

The enzyme catalyses 5-O-(1-carboxyvinyl)-3-phosphoshikimate = chorismate + phosphate. It participates in metabolic intermediate biosynthesis; chorismate biosynthesis; chorismate from D-erythrose 4-phosphate and phosphoenolpyruvate: step 7/7. Catalyzes the anti-1,4-elimination of the C-3 phosphate and the C-6 proR hydrogen from 5-enolpyruvylshikimate-3-phosphate (EPSP) to yield chorismate, which is the branch point compound that serves as the starting substrate for the three terminal pathways of aromatic amino acid biosynthesis. This reaction introduces a second double bond into the aromatic ring system. This chain is Chorismate synthase, found in Helicobacter pylori (strain J99 / ATCC 700824) (Campylobacter pylori J99).